A 221-amino-acid polypeptide reads, in one-letter code: Hydrogenase expression/formation protein HupD (221 aa).

Residues E20, D66, and H97 each contribute to the Ni(2+) site.

This sequence belongs to the peptidase A31 family.

Functionally, not known. Could be involved in the processing of hydrogenase. The polypeptide is Hydrogenase expression/formation protein HupD (hupD) (Thiocapsa roseopersicina).